A 238-amino-acid polypeptide reads, in one-letter code: Probable transglycosylase SceD 3 (238 aa).

The N-terminal stretch at 1–27 (MKKTVVASTLAVGLGVTGFAAGNSADA) is a signal peptide. The disordered stretch occupies residues 82–161 (YGQGSTNAPA…SEASEGSSVN (80 aa)). The segment covering 89 to 156 (APAQETAEQP…NESSSSEASE (68 aa)) has biased composition (low complexity).

This sequence belongs to the transglycosylase family. SceD subfamily.

The protein resides in the secreted. Its function is as follows. Is able to cleave peptidoglycan and affects clumping and separation of bacterial cells. The sequence is that of Probable transglycosylase SceD 3 (sceD3) from Staphylococcus saprophyticus subsp. saprophyticus (strain ATCC 15305 / DSM 20229 / NCIMB 8711 / NCTC 7292 / S-41).